Reading from the N-terminus, the 338-residue chain is Inositol 2-dehydrogenase 4 (338 aa).

Belongs to the Gfo/Idh/MocA family. In terms of assembly, homotetramer.

It carries out the reaction myo-inositol + NAD(+) = scyllo-inosose + NADH + H(+). Its function is as follows. Involved in the oxidation of myo-inositol (MI) to 2-keto-myo-inositol (2KMI or 2-inosose). This chain is Inositol 2-dehydrogenase 4, found in Saccharopolyspora erythraea (strain ATCC 11635 / DSM 40517 / JCM 4748 / NBRC 13426 / NCIMB 8594 / NRRL 2338).